A 462-amino-acid polypeptide reads, in one-letter code: Exodeoxyribonuclease 7 large subunit (462 aa).

Belongs to the XseA family. Heterooligomer composed of large and small subunits.

It localises to the cytoplasm. It carries out the reaction Exonucleolytic cleavage in either 5'- to 3'- or 3'- to 5'-direction to yield nucleoside 5'-phosphates.. Bidirectionally degrades single-stranded DNA into large acid-insoluble oligonucleotides, which are then degraded further into small acid-soluble oligonucleotides. The protein is Exodeoxyribonuclease 7 large subunit of Proteus mirabilis (strain HI4320).